The chain runs to 163 residues: Protein LOL5 (163 aa).

2 stretches are compositionally biased toward polar residues: residues 1–25 (MSQL…QPQS) and 33–44 (LQPQHPPSSTAH). Residues 1-51 (MSQLPLASQATTTDLVSTTAMQPQSEGIVDESLQPQHPPSSTAHDSPCLQD) form a disordered region. Putative zinc finger regions lie at residues 70 to 100 (QMVC…MNYV) and 108 to 138 (KVHC…VTEI).

It localises to the nucleus. Functionally, involved in plant growth and disease resistance. This is Protein LOL5 (LOL5) from Oryza sativa subsp. japonica (Rice).